The sequence spans 470 residues: Maturase K (470 aa).

The protein belongs to the intron maturase 2 family. MatK subfamily.

It localises to the plastid. The protein resides in the chloroplast. Usually encoded in the trnK tRNA gene intron. Probably assists in splicing its own and other chloroplast group II introns. The sequence is that of Maturase K from Nypa fruticans (Nypa palm).